The primary structure comprises 201 residues: Adenylyl-sulfate kinase (201 aa).

Residue Gly-35–Ser-42 coordinates ATP. Ser-109 acts as the Phosphoserine intermediate in catalysis.

It belongs to the APS kinase family.

The catalysed reaction is adenosine 5'-phosphosulfate + ATP = 3'-phosphoadenylyl sulfate + ADP + H(+). The protein operates within sulfur metabolism; hydrogen sulfide biosynthesis; sulfite from sulfate: step 2/3. Its function is as follows. Catalyzes the synthesis of activated sulfate. This is Adenylyl-sulfate kinase from Escherichia coli O139:H28 (strain E24377A / ETEC).